We begin with the raw amino-acid sequence, 387 residues long: MAAPPAPQPPSLLGYHRVLSPLAGIRVSPLCLGTMHFGGQWTRAMGDVTKETAFALLDRFYEAGGNFIDTANFYQGEGSEKWLGEWVASRGNRDELVLATKYTMSYRLTGPEKIKSNFQGSHSKSLRLSVEASLAKLRTDYIDLLYVHMWDFSTSVEEVMQSLHHLVAAGKVLNIGISDAPAWVVAKCNEYARFHGLTRFCVYQGRWACSYRDFEREILPMCQSEGLALAPWGALGRGQYKSAEEFQQEGTRNMGPQEEKHRLMGAKLTEVGERKGVAAAAIALAYLLHKSPYVFPVIGCRTVEQLEANITSLGVELSDEEIYEIEDTIPFDVGFPMAFLFESPQQKYRSDMTTRHIWQVTCNARIESVPKPRPIEPKQGYKQMDRK.

Asp-69 is an NADP(+) binding site. Tyr-74 functions as the Proton donor in the catalytic mechanism. His-148 lines the substrate pocket. Residues 178–179 (SD), Gln-204, 233–243 (GALGRGQYKSA), and 301–309 (RTVEQLEAN) each bind NADP(+).

Belongs to the aldo/keto reductase family. Aldo/keto reductase 2 subfamily.

It participates in mycotoxin biosynthesis; sterigmatocystin biosynthesis. Its function is as follows. Norsolorinic acid reductase; part of the gene cluster that mediates the biosynthesis of sterigmatocystin (ST), a polyketide-derived furanocoumarin which is part of the most toxic and carcinogenic compounds among the known mycotoxins. The first step in the biosynthesis of sterigmatocystin is the production of hexanoate by the fatty acid synthase (FAS) units stcJ and stcK. The polyketide backbone is assembled by the non-reducing polyketide synthase stcA by condensation of the starter hexanoyl-CoA and 7 malonyl-CoA extender units followed by cyclization and release of norsolorinic acid. Norsolorinic acid is the first stable intermediate in the biosynthesis of sterigmatocystin and is converted into averantin (AVN) by the ketoreductase stcE which reduces the hexanoate ketone to an alcohol. Averantin is then oxidized into 5'-hydroxyaverantin (HAVN) by the cytochrome P450 monooxygenase stcF. 5'-hydroxyaverantin is further converted to 5'-oxyaverantin (OAVN) by the 5'-hydroxyaverantin dehydrogenase stcG. The next step is the conversion of OAVN into averufin (AVF) which is catalyzed by a yet to be identified enzyme. The cytochrome P450 monooxygenase stcB and the flavin-binding monooxygenase stcW are both required for the conversion of averufin to 1-hydroxyversicolorone. The esterase stcI probably catalyzes the formation of versiconal hemiacetal acetate from 1-hydroxyversicolorone. The oxydoreductase stcN then probably catalyzes the biosynthetic step from versiconal to versicolorin B (VERB). The next step is performed by the versicolorin B desaturase stcL to produce versicolorin A (VERA). The ketoreductase stcU and the cytochrome P450 monooxygenase stcS are involved in the conversion of versicolorin A to demethylsterigmatocystin. The Baeyer-Villiger oxidas stcQ and the reductase stcR might be involved in the biosynthetic step from versicolorin A to demethylsterigmatocystin. The final step in the biosynthesis of sterigmatocystin is the methylation of demethylsterigmatocystin catalyzed by the methyltransferase stcP. The chain is Norsolorinic acid reductase stcV from Emericella nidulans (strain FGSC A4 / ATCC 38163 / CBS 112.46 / NRRL 194 / M139) (Aspergillus nidulans).